The primary structure comprises 151 residues: MLKGFKEFLARGNIVDLAVAVVIGTAFTALVTKFTDSIITPLINRIGVNAQSDVGILRIGIGGGQTIDLNVLLSAAINFFLIAFAVYFLVVLPYNTLRKKGEVEQPGDTQVVLLTEIRDLLAQTNGDSPGRHGGRGTPSPTDGPLASTESQ.

A run of 2 helical transmembrane segments spans residues 12–32 and 71–91; these read GNIV…ALVT and VLLS…FLVV. The tract at residues 122-151 is disordered; it reads AQTNGDSPGRHGGRGTPSPTDGPLASTESQ.

This sequence belongs to the MscL family. In terms of assembly, homopentamer.

The protein localises to the cell membrane. In terms of biological role, channel that opens in response to stretch forces in the membrane lipid bilayer. May participate in the regulation of osmotic pressure changes within the cell. The chain is Large-conductance mechanosensitive channel from Mycobacterium bovis (strain BCG / Pasteur 1173P2).